We begin with the raw amino-acid sequence, 549 residues long: MKRVLTALAAALPFAAHAADAISGAVERQPTNWQAIIMFLIFVVFTLGITYWASKRVRSRSDYYTAGGNITGFQNGLAIAGDYMSAASFLGISALVFTSGYDGLIYSLGFLVGWPIILFLIAERLRNLGRYTFADVASYRLKQGPIRILSACGSLVVVALYLIAQMVGAGKLIELLFGLNYHIAVVLVGVLMMMYVLFGGMLATTWVQIIKAVLLLFGASFMAFMVMKHVGFSFNNLFTEAMAVHPKGTAIMSPGGLVQDPISALSLGLGLMFGTAGLPHILMRFFTVSDAREARKSVFYATGFMGYFYILTFIIGFGAIMLVGANPAYKDAAGALIGGNNMAAVHLANAVGGNLFLGFISAVAFATILAVVAGLTLAGASAVSHDLYANVFRKGATEREELKVSKITVLVLGVIAIILGVLFENQNIAFMVGLAFAIAASCNFPIILLSMYWSKLTTRGAMLGGWLGLLTAVVLMILGPTIWVQILGHEKAIFPYEYPALFSISVAFLGIWFFSATDNSAEGNREREQFRAQFIRSQTGFGVEQGRAH.

A run of 13 helical transmembrane segments spans residues 33 to 53, 77 to 97, 103 to 123, 148 to 168, 183 to 203, 206 to 226, 262 to 282, 303 to 323, 355 to 375, 404 to 424, 428 to 448, 464 to 484, and 493 to 513; these read WQAI…TYWA, LAIA…ALVF, GLIY…LIAE, ILSA…QMVG, IAVV…GMLA, WVQI…AFMV, ISAL…PHIL, GFMG…IMLV, LFLG…VAGL, VSKI…VLFE, IAFM…PIIL, GGWL…TIWV, and IFPY…GIWF.

This sequence belongs to the sodium:solute symporter (SSF) (TC 2.A.21) family.

The protein resides in the cell inner membrane. Transports acetate. In Salmonella arizonae (strain ATCC BAA-731 / CDC346-86 / RSK2980), this protein is Cation/acetate symporter ActP.